Reading from the N-terminus, the 556-residue chain is CDP-diacylglycerol--glycerol-3-phosphate 3-phosphatidyltransferase, mitochondrial (556 aa).

A mitochondrion-targeting transit peptide spans 1–28; it reads MAVAAAAAAGPVFWRRLLGLLPGRPGLA. The residue at position 49 (Ser49) is a Phosphoserine. 124–131 is an ATP binding site; that stretch reads ASLYLGTG. PLD phosphodiesterase domains follow at residues 215-241 and 460-493; these read TIGL…SDSY and RGWT…GYRS. Active-site residues include His220, Lys222, and Asp227.

Belongs to the CDP-alcohol phosphatidyltransferase class-II family.

Its subcellular location is the mitochondrion. It carries out the reaction a CDP-1,2-diacyl-sn-glycerol + sn-glycerol 3-phosphate = a 1,2-diacyl-sn-glycero-3-phospho-(1'-sn-glycero-3'-phosphate) + CMP + H(+). It functions in the pathway phospholipid metabolism; phosphatidylglycerol biosynthesis; phosphatidylglycerol from CDP-diacylglycerol: step 1/2. Activated by calcium and magnesium and inhibited by other bivalent cations. In terms of biological role, functions in the biosynthesis of the anionic phospholipids phosphatidylglycerol and cardiolipin. This Pongo abelii (Sumatran orangutan) protein is CDP-diacylglycerol--glycerol-3-phosphate 3-phosphatidyltransferase, mitochondrial (PGS1).